The sequence spans 278 residues: Gasdermin-like protein het-Q1 (278 aa).

This sequence belongs to the gasdermin family. In terms of assembly, homooligomer; forms a homooligomeric ring-shaped pore complex when inserted in the membrane. Post-translationally, the precursor form is cleaved by het-Q2, generating the pore-forming protein (Gasdermin-like protein het-Q1, N-terminal).

The protein localises to the cell membrane. Gasdermin-like protein involved in heterokaryon incompatibility, a process that ensures that during spontaneous vegetative cell fusion, only compatible cells from the same colony survive (non-self-recognition). In P.anserina, the het-q locus exists as 2 incompatible alleles, het-Q1 (this entry) and het-Q2 (AC P0DW09). This form constitutes the precursor of the pore-forming protein: during the allorecognition process, it is cleaved by het-Q2, releasing the N-terminal moiety (Gasdermin-like protein het-Q1, N-terminal) that binds to membranes and forms pores, triggering cell death. Functionally, pore-forming protein that causes membrane permeabilization and cell death. Released upon cleavage and maturation by het-Q2 and binds to membrane inner leaflet lipids. Homooligomerizes within the membrane and forms pores of 10-15 nanometers (nm) of inner diameter, triggering cell death. This chain is Gasdermin-like protein het-Q1, found in Podospora anserina (strain S / ATCC MYA-4624 / DSM 980 / FGSC 10383) (Pleurage anserina).